Here is a 404-residue protein sequence, read N- to C-terminus: Demethylphylloquinone reductase NdbB (404 aa).

7–43 (RICILGGGFGGLYTALRLGQLSWEGHTPPEIVLVDQR) contacts FAD. An NADP(+)-binding site is contributed by 159–195 (IRIAIVGGGYSGVELAAKLGDRLGERGRIRIIERGKE).

The protein belongs to the NADH dehydrogenase family. The cofactor is FAD.

It carries out the reaction demethylphylloquinone + NADPH + H(+) = demethylphylloquinol + NADP(+). It functions in the pathway cofactor biosynthesis; phylloquinone biosynthesis. With respect to regulation, inhibited by dicumarol. Bifunctional oxidoreductase probably ables to act both on prenyl naphthoquinones and on prenyl benzoquinones. Catalyzes the penultimate step in the biosynthesis of vitamin K1. This chain is Demethylphylloquinone reductase NdbB, found in Synechocystis sp. (strain ATCC 27184 / PCC 6803 / Kazusa).